A 322-amino-acid chain; its full sequence is Beta-1,4-galactosyltransferase 7 (322 aa).

Over 1 to 9 the chain is Cytoplasmic; sequence MVNISTINW. The helical; Signal-anchor for type II membrane protein transmembrane segment at 10-30 threads the bilayer; sequence VFVCGLSFCLGGIAVLSLMPL. Residues 31–322 are Lumenal-facing; it reads GSDCVCPLSN…TAAAASAVQT (292 aa). Residues proline 82, arginine 84, aspartate 145, and valine 146 each contribute to the UDP-alpha-D-galactose site. Residue aspartate 147 coordinates Mn(2+). UDP-alpha-D-galactose is bound by residues tyrosine 177, glycine 185, tryptophan 207, and glycine 208. Position 209 (leucine 209) interacts with beta-D-xylose. Glutamate 210 is a binding site for UDP-alpha-D-galactose. Beta-D-xylose-binding residues include aspartate 211 and aspartate 212. A glycan (N-linked (GlcNAc...) asparagine) is linked at asparagine 236. Positions 241, 243, and 250 each coordinate UDP-alpha-D-galactose. Mn(2+)-binding residues include histidine 241 and histidine 243. 2 cysteine pairs are disulfide-bonded: cysteine 255–cysteine 310 and cysteine 300–cysteine 308.

This sequence belongs to the glycosyltransferase 7 family. Mn(2+) is required as a cofactor. In terms of tissue distribution, expressed in male and female adults. Expressed in head.

The protein localises to the golgi apparatus membrane. It catalyses the reaction 3-O-(beta-D-xylosyl)-L-seryl-[protein] + UDP-alpha-D-galactose = 3-O-(beta-D-galactosyl-(1-&gt;4)-beta-D-xylosyl)-L-seryl-[protein] + UDP + H(+). It functions in the pathway protein modification; protein glycosylation. In terms of biological role, transfers galactose from UDP-D-Galactose (UDP-Gal) to the acceptor xylose residue in the linkage tetrasaccharide region of the glycosaminoglycan side chain of proteoglycans. No activity towards beta-GlcNAc, beta-Glc, beta-Gal, and beta-GalNAc as acceptors. The polypeptide is Beta-1,4-galactosyltransferase 7 (Drosophila melanogaster (Fruit fly)).